The sequence spans 932 residues: Isoleucine--tRNA ligase (932 aa).

The 'HIGH' region signature appears at 57–67 (PYANGDIHMGH). Residue Glu-556 coordinates L-isoleucyl-5'-AMP. The 'KMSKS' region signature appears at 597–601 (KMSKS). Lys-600 serves as a coordination point for ATP. Zn(2+) contacts are provided by Cys-891, Cys-894, Cys-911, and Cys-914.

The protein belongs to the class-I aminoacyl-tRNA synthetase family. IleS type 1 subfamily. As to quaternary structure, monomer. Zn(2+) is required as a cofactor.

The protein resides in the cytoplasm. The enzyme catalyses tRNA(Ile) + L-isoleucine + ATP = L-isoleucyl-tRNA(Ile) + AMP + diphosphate. In terms of biological role, catalyzes the attachment of isoleucine to tRNA(Ile). As IleRS can inadvertently accommodate and process structurally similar amino acids such as valine, to avoid such errors it has two additional distinct tRNA(Ile)-dependent editing activities. One activity is designated as 'pretransfer' editing and involves the hydrolysis of activated Val-AMP. The other activity is designated 'posttransfer' editing and involves deacylation of mischarged Val-tRNA(Ile). In Lactiplantibacillus plantarum (strain ATCC BAA-793 / NCIMB 8826 / WCFS1) (Lactobacillus plantarum), this protein is Isoleucine--tRNA ligase.